The sequence spans 189 residues: HTH-type transcriptional repressor LfrR (189 aa).

One can recognise an HTH tetR-type domain in the interval E12–S70. Positions A33–Y52 form a DNA-binding region, H-T-H motif. The interval S70–N71 is proflavine binding.

Homodimer. Forms a structurally asymmetric homodimer exhibiting local unfolding and a blocked drug-binding site.

With respect to regulation, repressor activity is regulated by binding of different substrates of the LfrA multidrug efflux pump, such as acriflavine, proflavine, ethidium bromide and rhodamine 123. Binding of these ligands causes the dissociation of LfrR from the promoter, inducing lfrA expression. Its function is as follows. Represses the transcription of the lfrRA operon by binding directly to the promoter region of lfrR-lfrA. Binds specifically to a 143-bp region upstream of the lfrR gene. This is HTH-type transcriptional repressor LfrR from Mycolicibacterium smegmatis (strain ATCC 700084 / mc(2)155) (Mycobacterium smegmatis).